The chain runs to 878 residues: Longitudinals lacking protein, isoforms N/O/W/X/Y (878 aa).

The region spanning 32–97 (VDCTLAAEGK…MYRGEVNISQ (66 aa)) is the BTB domain. 3 disordered regions span residues 115–200 (LSDN…SSVL), 228–340 (SSGP…ASAS), and 542–583 (QIVK…QTHA). 5 stretches are compositionally biased toward low complexity: residues 162–175 (SGDV…SSSP), 228–251 (SSGP…LTST), 263–293 (TSST…QTTS), 329–340 (NSATGPNPASAS), and 546–569 (QQHQ…QQQQ). The C2H2-type 1; degenerate zinc-finger motif lies at 709–731 (YACNVCGKTYKIKGSLKRHKNYE). Residues 794–816 (FQCDFCLKWFKRRSHLNRHKKLH) form a C2H2-type 2 zinc finger. A disordered region spans residues 826 to 863 (SKQKPKTTSGQNLSHDANTDDEVATTNPAATEDESNYP). Polar residues predominate over residues 831–841 (KTTSGQNLSHD).

By stage 11, isoform W, isoform X and isoform Y are expressed throughout the mesoderm, whereas isoform O is expressed in both mesoderm and ectoderm. From stage 15, expression of isoform O expands to all tissues, whereas expression of isoform W, isoform X and isoform Y becomes restricted during later stages; starting from stage 14 to 16, isoform W, isoform X and isoform Y are expressed in muscle. From stages 14 and 15, isoform W and isoform Y are expressed in the gut. For some isoforms, expression is also seen in specific types of cells in the embryo; isoform O is expressed in the ventral furrow at stage 5 and in the dorsal epidermis from stage 7. Isoform Y shows prominent expression in the gonad starting at stage 15.

It is found in the nucleus. Putative transcription factor required for axon growth and guidance in the central and peripheral nervous systems. Repels CNS axons away from the midline by promoting the expression of the midline repellent sli and its receptor robo. In Drosophila melanogaster (Fruit fly), this protein is Longitudinals lacking protein, isoforms N/O/W/X/Y.